We begin with the raw amino-acid sequence, 128 residues long: S-protein homolog 5 (128 aa).

Positions 1 to 20 (MEKVSIVCFFFFLLFGSGYG) are cleaved as a signal peptide.

This sequence belongs to the plant self-incompatibility (S1) protein family.

It is found in the secreted. The protein is S-protein homolog 5 of Arabidopsis thaliana (Mouse-ear cress).